We begin with the raw amino-acid sequence, 233 residues long: Large ribosomal subunit protein uL1 (233 aa).

The protein belongs to the universal ribosomal protein uL1 family. In terms of assembly, part of the 50S ribosomal subunit.

In terms of biological role, binds directly to 23S rRNA. The L1 stalk is quite mobile in the ribosome, and is involved in E site tRNA release. Functionally, protein L1 is also a translational repressor protein, it controls the translation of the L11 operon by binding to its mRNA. This Photorhabdus laumondii subsp. laumondii (strain DSM 15139 / CIP 105565 / TT01) (Photorhabdus luminescens subsp. laumondii) protein is Large ribosomal subunit protein uL1.